A 337-amino-acid chain; its full sequence is ATP-dependent 6-phosphofructokinase (337 aa).

Gly-11 contacts ATP. 21 to 25 (RAVVR) provides a ligand contact to ADP. ATP contacts are provided by residues 72-73 (RY) and 102-105 (GDGS). Asp-103 contributes to the Mg(2+) binding site. 125–127 (TID) is a substrate binding site. Residue Asp-127 is the Proton acceptor of the active site. ADP is bound at residue Arg-154. Substrate is bound by residues Arg-162 and 169–171 (MGR). ADP-binding positions include 185-187 (GAD), Lys-212, and 214-216 (KNH). Residues Glu-223, Arg-245, and 251-254 (HILR) each bind substrate.

This sequence belongs to the phosphofructokinase type A (PFKA) family. ATP-dependent PFK group I subfamily. Prokaryotic clade 'B1' sub-subfamily. Homotetramer. It depends on Mg(2+) as a cofactor.

The protein resides in the cytoplasm. The catalysed reaction is beta-D-fructose 6-phosphate + ATP = beta-D-fructose 1,6-bisphosphate + ADP + H(+). Its pathway is carbohydrate degradation; glycolysis; D-glyceraldehyde 3-phosphate and glycerone phosphate from D-glucose: step 3/4. Allosterically activated by ADP and other diphosphonucleosides, and allosterically inhibited by phosphoenolpyruvate. Functionally, catalyzes the phosphorylation of D-fructose 6-phosphate to fructose 1,6-bisphosphate by ATP, the first committing step of glycolysis. This chain is ATP-dependent 6-phosphofructokinase, found in Streptococcus pyogenes serotype M3 (strain SSI-1).